Reading from the N-terminus, the 276-residue chain is Light-independent protochlorophyllide reductase iron-sulfur ATP-binding protein (276 aa).

ATP contacts are provided by residues 12 to 17 (GIGKST) and Lys41. Ser16 is a Mg(2+) binding site. Positions 97 and 131 each coordinate [4Fe-4S] cluster. 182-183 (NR) provides a ligand contact to ATP.

This sequence belongs to the NifH/BchL/ChlL family. In terms of assembly, homodimer. Protochlorophyllide reductase is composed of three subunits; BchL, BchN and BchB. [4Fe-4S] cluster is required as a cofactor.

It catalyses the reaction chlorophyllide a + oxidized 2[4Fe-4S]-[ferredoxin] + 2 ADP + 2 phosphate = protochlorophyllide a + reduced 2[4Fe-4S]-[ferredoxin] + 2 ATP + 2 H2O. Its pathway is porphyrin-containing compound metabolism; bacteriochlorophyll biosynthesis (light-independent). In terms of biological role, component of the dark-operative protochlorophyllide reductase (DPOR) that uses Mg-ATP and reduced ferredoxin to reduce ring D of protochlorophyllide (Pchlide) to form chlorophyllide a (Chlide). This reaction is light-independent. The L component serves as a unique electron donor to the NB-component of the complex, and binds Mg-ATP. This is Light-independent protochlorophyllide reductase iron-sulfur ATP-binding protein from Chlorobium luteolum (strain DSM 273 / BCRC 81028 / 2530) (Pelodictyon luteolum).